Consider the following 364-residue polypeptide: Pre-mRNA-splicing factor SLT11 (364 aa).

A disordered region spans residues 331–364; the sequence is KSTDNAKNDKKKTSKKVHKDRSKKSKPRANKLTI. Residues 339-364 are compositionally biased toward basic residues; sequence DKKKTSKKVHKDRSKKSKPRANKLTI.

It belongs to the SLT11 family. Belongs to the CWC complex (or CEF1-associated complex), a spliceosome subcomplex composed of the U2, U5 and U6 snRNAs and at least BUD13, BUD31, BRR2, CDC40, CEF1, CLF1, CUS1, CWC2, CWC15, CWC21, CWC22, CWC23, CWC24, CWC25, CWC27, ECM2, HSH155, IST3, ISY1, LEA1, MSL1, NTC20, PRP8, PRP9, PRP11, PRP19, PRP21, PRP22, PRP45, PRP46, SLU7, SMB1, SMD1, SMD2, SMD3, SMX2, SMX3, SNT309, SNU114, SPP2, SYF1, SYF2, RSE1 and YJU2. Interacts with SLU7.

The protein resides in the nucleus. In terms of biological role, involved in pre-mRNA splicing. Facilitates the cooperative formation of U2/U6 helix II in association with stem II in the spliceosome. Binds to RNA. This Saccharomyces cerevisiae (strain ATCC 204508 / S288c) (Baker's yeast) protein is Pre-mRNA-splicing factor SLT11 (ECM2).